The chain runs to 361 residues: RLA class I histocompatibility antigen, alpha chain 11/11 (361 aa).

The N-terminal stretch at 1 to 24 is a signal peptide; the sequence is MGSMAPRTLLLLLAGALTLKDTQA. The tract at residues 25–114 is alpha-1; sequence GSHSMRYFYT…ALRYYNQSAA (90 aa). Over 25-308 the chain is Extracellular; the sequence is GSHSMRYFYT…EPPAQPTALI (284 aa). Residue asparagine 110 is glycosylated (N-linked (GlcNAc...) asparagine). Residues 115–206 are alpha-2; it reads GSHTFQTMFG…EMGKETLQRA (92 aa). 2 disulfides stabilise this stretch: cysteine 125-cysteine 188 and cysteine 227-cysteine 283. The tract at residues 207 to 298 is alpha-3; it reads DPPKAHVTHH…GLPEPLTLTW (92 aa). Residues 209–297 enclose the Ig-like C1-type domain; it reads PKAHVTHHPA…EGLPEPLTLT (89 aa). Positions 299 to 308 are connecting peptide; that stretch reads EPPAQPTALI. The chain crosses the membrane as a helical span at residues 309-329; sequence VGIVAGVLGVLLILGAVVAVV. Residues 330-361 are Cytoplasmic-facing; the sequence is RRKKHSSDGKGGRYTPAAGGHRDQGSDDSLMP. Residues 335-361 are disordered; that stretch reads SSDGKGGRYTPAAGGHRDQGSDDSLMP. Residues serine 355 and serine 358 each carry the phosphoserine modification.

Belongs to the MHC class I family. Heterodimer of an alpha chain and a beta chain (beta-2-microglobulin).

It is found in the membrane. Involved in the presentation of foreign antigens to the immune system. The sequence is that of RLA class I histocompatibility antigen, alpha chain 11/11 from Oryctolagus cuniculus (Rabbit).